The chain runs to 410 residues: WD repeat and FYVE domain-containing protein 1 (410 aa).

WD repeat units follow at residues 22–61, 66–105, 112–150, 153–192, 197–236, and 240–279; these read GHQD…QYWP, TMAS…NKMN, AHQN…NMLG, FFSS…CSVI, GHEG…GRTL, and GHHD…EEAP. The FYVE-type zinc-finger motif lies at 281–352; it reads WLESDSCQKC…VCDSCYDSIK (72 aa). Residues Cys287, Cys290, Cys314, Cys317, Cys322, Cys325, Cys344, and Cys347 each contribute to the Zn(2+) site. A WD 7 repeat occupies 364–403; it reads EGKHNISHMSMDIARGLMVTCGTDRVVKIWDMTPVVGCSL. A Phosphoserine modification is found at Ser408.

As to quaternary structure, binds PtdIns3P in vitro with high specificity over other phosphoinositides. Interacts (via WD repeat 2) with tyrosine-phosphorylated TLR3 (via TIR domain) in response to poly(I:C). Interacts with TLR4 in response to LPS. Interacts with TICAM1 in response to poly(I:C).

It localises to the early endosome. Positively regulates TLR3- and TLR4-mediated signaling pathways by bridging the interaction between TLR3 or TLR4 and TICAM1. Promotes TLR3/4 ligand-induced activation of transcription factors IRF3 and NF-kappa-B, as well as the production of IFN-beta and inflammatory cytokines. The polypeptide is WD repeat and FYVE domain-containing protein 1 (Wdfy1) (Mus musculus (Mouse)).